Reading from the N-terminus, the 186-residue chain is UPF0398 protein BPUM_1952 (186 aa).

The protein belongs to the UPF0398 family.

This chain is UPF0398 protein BPUM_1952, found in Bacillus pumilus (strain SAFR-032).